A 614-amino-acid chain; its full sequence is Bifunctional 3'-phosphoadenosine 5'-phosphosulfate synthase 2 (614 aa).

The interval 1 to 215 is adenylyl-sulfate kinase; it reads MSGIKKQKTE…VVELLQEQNI (215 aa). Residue 52-57 coordinates ATP; the sequence is GAGKTT. Adenosine 5'-phosphosulfate-binding positions include 79–82, Phe91, 96–99, 122–123, Lys161, and 174–175; these read DNVR, REEN, IS, and GF. ATP-binding positions include Ser197, 409 to 412, 511 to 515, and Ala553; these read QLRN and GRDPA. Residues 224–614 are sulfate adenylyltransferase; it reads IHELFVPENK…TDYYRSLEKN (391 aa).

In the N-terminal section; belongs to the APS kinase family. The protein in the C-terminal section; belongs to the sulfate adenylyltransferase family. As to expression, expressed in cartilage and adrenal gland.

The enzyme catalyses sulfate + ATP + H(+) = adenosine 5'-phosphosulfate + diphosphate. It carries out the reaction adenosine 5'-phosphosulfate + ATP = 3'-phosphoadenylyl sulfate + ADP + H(+). It participates in sulfur metabolism; sulfate assimilation. Its function is as follows. Bifunctional enzyme with both ATP sulfurylase and APS kinase activity, which mediates two steps in the sulfate activation pathway. The first step is the transfer of a sulfate group to ATP to yield adenosine 5'-phosphosulfate (APS), and the second step is the transfer of a phosphate group from ATP to APS yielding 3'-phosphoadenylylsulfate/PAPS, the activated sulfate donor used by sulfotransferases. In mammals, PAPS is the sole source of sulfate while APS appears to only be an intermediate in the sulfate-activation pathway. Plays indirectly an important role in skeletogenesis during postnatal growth. This chain is Bifunctional 3'-phosphoadenosine 5'-phosphosulfate synthase 2 (PAPSS2), found in Homo sapiens (Human).